Consider the following 309-residue polypeptide: Tagatose-6-phosphate kinase 1 (309 aa).

The protein belongs to the carbohydrate kinase PfkB family. LacC subfamily.

It carries out the reaction D-tagatofuranose 6-phosphate + ATP = D-tagatofuranose 1,6-bisphosphate + ADP + H(+). Its pathway is carbohydrate metabolism; D-tagatose 6-phosphate degradation; D-glyceraldehyde 3-phosphate and glycerone phosphate from D-tagatose 6-phosphate: step 1/2. This Streptococcus agalactiae serotype III (strain NEM316) protein is Tagatose-6-phosphate kinase 1.